A 205-amino-acid chain; its full sequence is LIM domain-containing protein PLIM2b (205 aa).

LIM zinc-binding domains are found at residues 8 to 68 (DKCN…LFKE) and 102 to 162 (DKCA…LFME). The disordered stretch occupies residues 177-205 (RTASGNTLPPEPTEDVAVEAKEENGVSES). The segment covering 194–205 (VEAKEENGVSES) has biased composition (basic and acidic residues).

In terms of assembly, interacts with F-actin. Predominantly expressed in flowers and in pollen grains. Detected in vasculature and roots.

It localises to the cytoplasm. It is found in the cytoskeleton. Its function is as follows. Binds to actin filaments and promotes cross-linking into thick bundles. Has an actin-stabilizing activity. The actin regulatory activities are inhibited by pH &gt; 6.8 but are [Ca(2+)] independent. The polypeptide is LIM domain-containing protein PLIM2b (Arabidopsis thaliana (Mouse-ear cress)).